A 144-amino-acid polypeptide reads, in one-letter code: Hemoglobin subunit alpha-1 (144 aa).

Ser1 carries the N-acetylserine modification. Residues Ser1–Arg144 form the Globin domain. His61 is an O2 binding site. His90 contacts heme b.

Belongs to the globin family. In terms of assembly, heterotetramer of two alpha chains and two beta chains. In terms of tissue distribution, red blood cells.

Involved in oxygen transport from gills to the various peripheral tissues. This chain is Hemoglobin subunit alpha-1 (hba1), found in Oncorhynchus mykiss (Rainbow trout).